A 168-amino-acid polypeptide reads, in one-letter code: 6,7-dimethyl-8-ribityllumazine synthase (168 aa).

Residues Phe24, 58–60 (ALE), and 82–84 (AVI) contribute to the 5-amino-6-(D-ribitylamino)uracil site. Position 87-88 (87-88 (ET)) interacts with (2S)-2-hydroxy-3-oxobutyl phosphate. His90 functions as the Proton donor in the catalytic mechanism. Asn115 is a 5-amino-6-(D-ribitylamino)uracil binding site. Arg129 contributes to the (2S)-2-hydroxy-3-oxobutyl phosphate binding site.

It belongs to the DMRL synthase family.

The catalysed reaction is (2S)-2-hydroxy-3-oxobutyl phosphate + 5-amino-6-(D-ribitylamino)uracil = 6,7-dimethyl-8-(1-D-ribityl)lumazine + phosphate + 2 H2O + H(+). The protein operates within cofactor biosynthesis; riboflavin biosynthesis; riboflavin from 2-hydroxy-3-oxobutyl phosphate and 5-amino-6-(D-ribitylamino)uracil: step 1/2. Catalyzes the formation of 6,7-dimethyl-8-ribityllumazine by condensation of 5-amino-6-(D-ribitylamino)uracil with 3,4-dihydroxy-2-butanone 4-phosphate. This is the penultimate step in the biosynthesis of riboflavin. In Paraburkholderia phytofirmans (strain DSM 17436 / LMG 22146 / PsJN) (Burkholderia phytofirmans), this protein is 6,7-dimethyl-8-ribityllumazine synthase.